Reading from the N-terminus, the 94-residue chain is PqqA binding protein (94 aa).

This sequence belongs to the PqqD family. In terms of assembly, monomer. Interacts with PqqE.

It participates in cofactor biosynthesis; pyrroloquinoline quinone biosynthesis. Its function is as follows. Functions as a PqqA binding protein and presents PqqA to PqqE, in the pyrroloquinoline quinone (PQQ) biosynthetic pathway. The protein is PqqA binding protein of Pseudomonas syringae pv. syringae (strain B728a).